A 140-amino-acid chain; its full sequence is Putative pre-16S rRNA nuclease (140 aa).

This sequence belongs to the YqgF nuclease family.

Its subcellular location is the cytoplasm. Its function is as follows. Could be a nuclease involved in processing of the 5'-end of pre-16S rRNA. The protein is Putative pre-16S rRNA nuclease of Enterococcus faecalis (strain ATCC 700802 / V583).